A 555-amino-acid polypeptide reads, in one-letter code: CTP synthase (555 aa).

The tract at residues 1–265 is amidoligase domain; the sequence is MTRYIFITGG…GNRVCEKLNI (265 aa). Ser-13 contributes to the CTP binding site. Ser-13 serves as a coordination point for UTP. ATP-binding positions include 14-19 and Asp-71; that span reads SLGKGI. Residues Asp-71 and Glu-139 each contribute to the Mg(2+) site. Residues 146–148, 186–191, and Lys-222 each bind CTP; these read DIE and KTKPTQ. UTP-binding positions include 186 to 191 and Lys-222; that span reads KTKPTQ. The Glutamine amidotransferase type-1 domain occupies 290 to 541; that stretch reads TVAVVGKYVD…IKAGLAAKEA (252 aa). Residue Gly-351 participates in L-glutamine binding. Cys-378 acts as the Nucleophile; for glutamine hydrolysis in catalysis. L-glutamine-binding positions include 379–382, Glu-402, and Arg-469; that span reads LGMQ. Active-site residues include His-514 and Glu-516.

The protein belongs to the CTP synthase family. Homotetramer.

The enzyme catalyses UTP + L-glutamine + ATP + H2O = CTP + L-glutamate + ADP + phosphate + 2 H(+). The catalysed reaction is L-glutamine + H2O = L-glutamate + NH4(+). It carries out the reaction UTP + NH4(+) + ATP = CTP + ADP + phosphate + 2 H(+). The protein operates within pyrimidine metabolism; CTP biosynthesis via de novo pathway; CTP from UDP: step 2/2. Its activity is regulated as follows. Allosterically activated by GTP, when glutamine is the substrate; GTP has no effect on the reaction when ammonia is the substrate. The allosteric effector GTP functions by stabilizing the protein conformation that binds the tetrahedral intermediate(s) formed during glutamine hydrolysis. Inhibited by the product CTP, via allosteric rather than competitive inhibition. Catalyzes the ATP-dependent amination of UTP to CTP with either L-glutamine or ammonia as the source of nitrogen. Regulates intracellular CTP levels through interactions with the four ribonucleotide triphosphates. The polypeptide is CTP synthase (Coxiella burnetii (strain CbuG_Q212) (Coxiella burnetii (strain Q212))).